Consider the following 225-residue polypeptide: Uridylate kinase (225 aa).

Residue 9–10 participates in ATP binding; it reads GS. G44 contributes to the UMP binding site. ATP contacts are provided by G45 and R49. Residues D66 and 114 to 120 each bind UMP; that span reads THPGHTT. 4 residues coordinate ATP: T140, N141, Y146, and D149.

This sequence belongs to the UMP kinase family. Homohexamer.

Its subcellular location is the cytoplasm. It carries out the reaction UMP + ATP = UDP + ADP. It functions in the pathway pyrimidine metabolism; CTP biosynthesis via de novo pathway; UDP from UMP (UMPK route): step 1/1. Its activity is regulated as follows. Inhibited by UTP. Catalyzes the reversible phosphorylation of UMP to UDP. The sequence is that of Uridylate kinase from Pyrococcus abyssi (strain GE5 / Orsay).